A 69-amino-acid chain; its full sequence is Putative membrane protein insertion efficiency factor (69 aa).

It belongs to the UPF0161 family.

It localises to the cell inner membrane. Functionally, could be involved in insertion of integral membrane proteins into the membrane. This Laribacter hongkongensis (strain HLHK9) protein is Putative membrane protein insertion efficiency factor.